The primary structure comprises 513 residues: Sterol 14-alpha demethylase (513 aa).

Residues 10-30 traverse the membrane as a helical segment; the sequence is FTLVSAYAAAGLLAIIVLNLL. Asn37 and Asn406 each carry an N-linked (GlcNAc...) asparagine glycan. Cys453 lines the heme pocket.

This sequence belongs to the cytochrome P450 family. Requires heme as cofactor.

The protein resides in the endoplasmic reticulum membrane. It catalyses the reaction a 14alpha-methyl steroid + 3 reduced [NADPH--hemoprotein reductase] + 3 O2 = a Delta(14) steroid + formate + 3 oxidized [NADPH--hemoprotein reductase] + 4 H2O + 4 H(+). The enzyme catalyses a 14alpha-methyl steroid + reduced [NADPH--hemoprotein reductase] + O2 = a 14alpha-hydroxymethyl steroid + oxidized [NADPH--hemoprotein reductase] + H2O + H(+). It carries out the reaction a 14alpha-hydroxymethyl steroid + reduced [NADPH--hemoprotein reductase] + O2 = a 14alpha-formyl steroid + oxidized [NADPH--hemoprotein reductase] + 2 H2O + H(+). The catalysed reaction is a 14alpha-formyl steroid + reduced [NADPH--hemoprotein reductase] + O2 = a Delta(14) steroid + formate + oxidized [NADPH--hemoprotein reductase] + H2O + 2 H(+). It catalyses the reaction lanosterol + 3 reduced [NADPH--hemoprotein reductase] + 3 O2 = 4,4-dimethyl-5alpha-cholesta-8,14,24-trien-3beta-ol + formate + 3 oxidized [NADPH--hemoprotein reductase] + 4 H2O + 4 H(+). The enzyme catalyses lanosterol + reduced [NADPH--hemoprotein reductase] + O2 = 32-hydroxylanosterol + oxidized [NADPH--hemoprotein reductase] + H2O + H(+). It carries out the reaction 32-hydroxylanosterol + reduced [NADPH--hemoprotein reductase] + O2 = 32-oxolanosterol + oxidized [NADPH--hemoprotein reductase] + 2 H2O + H(+). The catalysed reaction is 32-oxolanosterol + reduced [NADPH--hemoprotein reductase] + O2 = 4,4-dimethyl-5alpha-cholesta-8,14,24-trien-3beta-ol + formate + oxidized [NADPH--hemoprotein reductase] + H2O + 2 H(+). It catalyses the reaction eburicol + 3 reduced [NADPH--hemoprotein reductase] + 3 O2 = 14-demethyleburicol + formate + 3 oxidized [NADPH--hemoprotein reductase] + 4 H2O + 4 H(+). The enzyme catalyses eburicol + reduced [NADPH--hemoprotein reductase] + O2 = 32-hydroxyeburicol + oxidized [NADPH--hemoprotein reductase] + H2O + H(+). It carries out the reaction 32-hydroxyeburicol + reduced [NADPH--hemoprotein reductase] + O2 = 32-oxoeburicol + oxidized [NADPH--hemoprotein reductase] + 2 H2O + H(+). The catalysed reaction is 32-oxoeburicol + reduced [NADPH--hemoprotein reductase] + O2 = 14-demethyleburicol + formate + oxidized [NADPH--hemoprotein reductase] + H2O + 2 H(+). The protein operates within steroid biosynthesis; sterol biosynthesis. Sterol 14alpha-demethylase, encoded by cyp51A, cyp51B and cyp51C, that plays a critical role in the third module of ergosterol biosynthesis pathway, being ergosterol the major sterol component in fungal membranes that participates in a variety of functions. The third module or late pathway involves the ergosterol synthesis itself through consecutive reactions that mainly occur in the endoplasmic reticulum (ER) membrane. In filamentous fungi, during the initial step of this module, lanosterol (lanosta-8,24-dien-3beta-ol) can be metabolized to eburicol. Sterol 14alpha-demethylase catalyzes the three-step oxidative removal of the 14alpha-methyl group (C-32) of both these sterols in the form of formate, and converts eburicol and lanosterol to 14-demethyleburicol (4,4,24-trimethylergosta-8,14,24(28)-trienol) and 4,4-dimethyl-5alpha-cholesta-8,14,24-trien-3beta-ol, respectively, which are further metabolized by other enzymes in the pathway to ergosterol. Can also use substrates not intrinsic to fungi, such as 24,25-dihydrolanosterol (DHL), producing 4,4'-dimethyl-8,14-cholestadien-3-beta-ol, but at lower rates than the endogenous substrates. Functionally, as a target of azole drugs, plays a crucial role in azole susceptibility. The protein is Sterol 14-alpha demethylase of Aspergillus flavus (strain ATCC 200026 / FGSC A1120 / IAM 13836 / NRRL 3357 / JCM 12722 / SRRC 167).